Consider the following 454-residue polypeptide: NADP-specific glutamate dehydrogenase 1 (454 aa).

Residue K110 is part of the active site. 174 to 203 contacts NAD(+); it reads GVLTGKGLNWGGSLIRPEATGYGLVYYTQA.

It belongs to the Glu/Leu/Phe/Val dehydrogenases family. Homohexamer.

The catalysed reaction is L-glutamate + NADP(+) + H2O = 2-oxoglutarate + NH4(+) + NADPH + H(+). The chain is NADP-specific glutamate dehydrogenase 1 (GDH1) from Saccharomyces uvarum (strain ATCC 76518 / CBS 7001 / CLIB 283 / NBRC 10550 / MCYC 623 / NCYC 2669 / NRRL Y-11845) (Yeast).